We begin with the raw amino-acid sequence, 90 residues long: Small ribosomal subunit protein uS15 (90 aa).

Belongs to the universal ribosomal protein uS15 family. As to quaternary structure, part of the 30S ribosomal subunit. Forms a bridge to the 50S subunit in the 70S ribosome, contacting the 23S rRNA.

In terms of biological role, one of the primary rRNA binding proteins, it binds directly to 16S rRNA where it helps nucleate assembly of the platform of the 30S subunit by binding and bridging several RNA helices of the 16S rRNA. Forms an intersubunit bridge (bridge B4) with the 23S rRNA of the 50S subunit in the ribosome. In Helicobacter pylori (strain J99 / ATCC 700824) (Campylobacter pylori J99), this protein is Small ribosomal subunit protein uS15.